Here is a 364-residue protein sequence, read N- to C-terminus: DNA replication and repair protein RecF (364 aa).

30-37 (GENAQGKT) serves as a coordination point for ATP.

It belongs to the RecF family.

It localises to the cytoplasm. The RecF protein is involved in DNA metabolism; it is required for DNA replication and normal SOS inducibility. RecF binds preferentially to single-stranded, linear DNA. It also seems to bind ATP. This Streptococcus suis (strain 98HAH33) protein is DNA replication and repair protein RecF.